A 240-amino-acid chain; its full sequence is Ribonuclease HII (240 aa).

Positions 31–222 (RLIAGVDEAG…VRRALGLETA (192 aa)) constitute an RNase H type-2 domain. The a divalent metal cation site is built by Asp-37, Glu-38, and Asp-130.

It belongs to the RNase HII family. Requires Mn(2+) as cofactor. It depends on Mg(2+) as a cofactor.

It is found in the cytoplasm. The catalysed reaction is Endonucleolytic cleavage to 5'-phosphomonoester.. Endonuclease that specifically degrades the RNA of RNA-DNA hybrids. In Xanthomonas campestris pv. campestris (strain 8004), this protein is Ribonuclease HII.